Consider the following 235-residue polypeptide: Ribonuclease PH (235 aa).

Residues Arg86 and 124 to 126 (GTR) contribute to the phosphate site.

This sequence belongs to the RNase PH family. As to quaternary structure, homohexameric ring arranged as a trimer of dimers.

It carries out the reaction tRNA(n+1) + phosphate = tRNA(n) + a ribonucleoside 5'-diphosphate. In terms of biological role, phosphorolytic 3'-5' exoribonuclease that plays an important role in tRNA 3'-end maturation. Removes nucleotide residues following the 3'-CCA terminus of tRNAs; can also add nucleotides to the ends of RNA molecules by using nucleoside diphosphates as substrates, but this may not be physiologically important. Probably plays a role in initiation of 16S rRNA degradation (leading to ribosome degradation) during starvation. The protein is Ribonuclease PH of Francisella tularensis subsp. tularensis (strain FSC 198).